The chain runs to 219 residues: Probable oxidoreductase virH (219 aa).

This sequence belongs to the oxidoreductase OpS7 family.

The protein operates within secondary metabolite biosynthesis. Probable oxidoreductase; part of the gene cluster that mediates the biosynthesis of virensols and trichoxide, fungal natural products that contain or are derived from a salicylaldehyde core. The pathway begins with the synthesis of the reduced chain in virensol C by the highly reducing polyketide synthase virA via condensation of one acetate and 8 malonate units. VirA has interesting programming rules since the first 2 ketides are fully reduced, the 3 following ketides undergo beta-dehydration, and the last 3 ketides are only reduced to beta-hydroxys to yield the trihydroxy portion. The production of aldehyde virensol C by virA alone is surprising, since virA does not contain a reductase (R) domain that is typically associated with reductive product release in HRPKS. The cupin-domain enzyme virC is involved in enhancing virA product turnover. The short-chain dehydrogenase virB then oxidizes the C-7 alcohol of virensol C to a ketone, yielding virensol D. Virensol D is further transformed to salicylaldehyde 5-deoxyaurocitrin by the short-chain dehydrogenase virD. VirD catalyzes the dehydrogenation of C-3 to form the beta-ketone aldehyde, which is followed by the generation of the nucleophilic C-2 that is required for the intramolecular aldol condensation between C-2 and C-7, itself followed by dehydration and aromatization which leads to salicylaldehyde 5-deoxyaurocitrin. While the dehydrogenation of virensol D is definitely catalyzed by virD, the aldol condensation and dehydration may be uncatalyzed or assisted by virD. The short chain dehydrogenase virG then converts salicylaldehyde 5-deoxyaurocitrin into virensol B which is further hydroxylated by the cytochrome P450 monooxygenase virE to yield the hydroquinone virensol A. VirI then may oxidize virensol A to form the quinone, while virH performs the epoxidation. Finally, the two remaining short-chain dehydrogenases, virK and virL, are probably responsible for reducing the ketones to the corresponding alcohols to furnish the epoxycyclohexanol structure in trichoxide. The polypeptide is Probable oxidoreductase virH (Hypocrea virens (strain Gv29-8 / FGSC 10586) (Gliocladium virens)).